We begin with the raw amino-acid sequence, 760 residues long: uncharacterized protein (760 aa).

A compositionally biased stretch (basic residues) spans 578–587; it reads RNRKQSKLRI. A disordered region spans residues 578-604; the sequence is RNRKQSKLRISKQQEIQPQKEESVKKE. The span at 595 to 604 shows a compositional bias: basic and acidic residues; that stretch reads PQKEESVKKE.

Its subcellular location is the mitochondrion. This is an uncharacterized protein from Dictyostelium citrinum (Slime mold).